The sequence spans 217 residues: Kunitz-type trypsin inhibitor-like 1 protein (217 aa).

The first 26 residues, 1-26, serve as a signal peptide directing secretion; it reads MKPLSPLTLSFFLFVFITNLSLAFSN. Disulfide bonds link Cys-70–Cys-115 and Cys-168–Cys-175. N-linked (GlcNAc...) asparagine glycosylation is present at Asn-191.

It belongs to the protease inhibitor I3 (leguminous Kunitz-type inhibitor) family. As to expression, expressed in roots, leaves, epidermal layers of elongating stems, meristems and in the vascular system.

The protein localises to the secreted. Its function is as follows. Might act as a protease inhibitor involved in plant defense responses. The polypeptide is Kunitz-type trypsin inhibitor-like 1 protein (PIP20-1) (Pisum sativum (Garden pea)).